The sequence spans 327 residues: MDAAWRGGVGCSPVCLDLCVGLSPVREPSAARHELLDRPAGCRGGGDSKSMTNDEAKILEAKVTQMSEENRRLTEVIARLYGGQIARLGLDGSASPPRPVSPLSGKKRSRESMETANSCDANSNRHQGGDADHAESFAADDGTCRRIKVSRVCRRIDPSDTSLVVKDGYQWRKYGQKVTRDNPSPRAYFRCAFAPSCPVKKKVQRSAEDSSLLVATYEGEHNHPHPSPRAGELPAAVGGAGGSLPCSISINSSGPTITLDLTKNGGAVQVVEAAHPPPPPDLKEVCREVASPEFRTALVEQMASALTSDPKFTGALAAAILQKLPEF.

Residues 56–76 (AKILEAKVTQMSEENRRLTEV) adopt a coiled-coil conformation. The segment at 88 to 134 (LGLDGSASPPRPVSPLSGKKRSRESMETANSCDANSNRHQGGDADHA) is disordered. The Nuclear localization signal signature appears at 106-112 (KKRSRES). Over residues 114 to 126 (ETANSCDANSNRH) the composition is skewed to polar residues. The WRKY DNA-binding region spans 160 to 226 (DTSLVVKDGY…YEGEHNHPHP (67 aa)).

Belongs to the WRKY group II-a family.

It is found in the nucleus. In terms of biological role, transcription repressor. Interacts specifically with the W box (5'-(T)TGAC[CT]-3'), a frequently occurring elicitor-responsive cis-acting element. Regulates, probably indirectly, the activation of defense-related genes during defense response. Modulates plant innate immunity against X.oryzae pv. oryzae (Xoo). The protein is WRKY transcription factor WRKY76 of Oryza sativa subsp. indica (Rice).